A 315-amino-acid polypeptide reads, in one-letter code: Diacylglycerol kinase (315 aa).

Residues 1-132 form the DAGKc domain; sequence MRKRARIIYN…VDIGKMNNRY (132 aa). ATP contacts are provided by residues 10-14, Thr41, 67-73, and Thr94; these read NPTSG and GDGTLNE. Mg(2+)-binding residues include Lys213, Asp216, and Tyr218. Glu273 functions as the Proton acceptor in the catalytic mechanism.

It belongs to the diacylglycerol/lipid kinase family. As to quaternary structure, homodimer. Mg(2+) is required as a cofactor.

It carries out the reaction a 1,2-diacyl-sn-glycerol + ATP = a 1,2-diacyl-sn-glycero-3-phosphate + ADP + H(+). Functionally, catalyzes the phosphorylation of diacylglycerol (DAG) into phosphatidic acid. Is a key enzyme involved in the production of lipoteichoic acid by reintroducing DAG formed from the breakdown of membrane phospholipids into the phosphatidylglycerol biosynthetic pathway. This is Diacylglycerol kinase (dagK) from Staphylococcus aureus (strain USA300 / TCH1516).